The sequence spans 950 residues: Sodium/calcium exchanger Calx (950 aa).

An N-terminal signal peptide occupies residues 1-22 (MQLLLKSIFTCALFVIFVYATA). Residues 23 to 120 (QSLLKVQETE…PQRNISVGDR (98 aa)) lie on the Extracellular side of the membrane. Residues Asn-39, Asn-47, and Asn-114 are each glycosylated (N-linked (GlcNAc...) asparagine). The chain crosses the membrane as a helical span at residues 121 to 141 (LVRGFVYFVLLIYLFVGVSII). The Cytoplasmic segment spans residues 142–179 (ADRFMAAIEAITSIERAVVVKGPNNTKQVMHVRIWNET). Residues 180 to 200 (VANLTLMALGSSAPEILLSVI) traverse the membrane as a helical segment. Topologically, residues 201–216 (EIYAKDFESGDLGPGT) are extracellular. The helical transmembrane segment at 217-237 (IVGSAAYNLFMIIAVCMIWIP) threads the bilayer. Residues 238–257 (AGEVRRIRHLRVFFVTALFS) lie on the Cytoplasmic side of the membrane. 2 helical membrane-spanning segments follow: residues 258–278 (VFAY…VILV) and 279–299 (WEAI…YIAE). Over 300–749 (RRLLVYKYMD…NDDEEEEVPS (450 aa)) the chain is Cytoplasmic. Residues 301 to 318 (RLLVYKYMDKNYRVNKRG) are corresponds to the exchanger inhibitory peptide (XIP) found in other sodium/calcium exchange proteins and thought to be involved in calmodulin binding. The 112-residue stretch at 440–551 (DPIRMYFEPG…MIATVMILDD (112 aa)) folds into the Calx-beta 1 domain. Ca(2+) contacts are provided by Glu-455, Asp-490, Asp-515, Asp-516, Val-518, Glu-520, Glu-523, Asp-550, Asp-551, and Asp-552. The 140-residue stretch at 555–694 (GIFAFTDSVF…LTTAYVRIRE (140 aa)) folds into the Calx-beta 2 domain. The chain crosses the membrane as a helical span at residues 750–770 (CFSYVSHFVCLFWKVLFAFVP). The Extracellular portion of the chain corresponds to 771–775 (PTDIC). Residues 776–796 (GGYVTFVVSIFVIGVITAIIG) traverse the membrane as a helical segment. Topologically, residues 797 to 813 (DAASYFGCALNIKDSVT) are cytoplasmic. Residues 814–834 (AILFVALGTSIPDTFASMIAA) form a helical membrane-spanning segment. Residues 835–848 (KHDEGADNCIGNVT) are Extracellular-facing. Residue Asn-846 is glycosylated (N-linked (GlcNAc...) asparagine). A helical membrane pass occupies residues 849–869 (GSNAVNVFLGIGLAWTIAAVY). Residues 870-883 (HSSHGMTFNVEPGT) are Cytoplasmic-facing. The chain crosses the membrane as a helical span at residues 884–904 (IGFAVALFCGEALIAIMLIMF). The Extracellular portion of the chain corresponds to 905-923 (RRWHKGIGAELGGPKVSKY). Residues 924–944 (ISAAILVFLWVFYVVICILEA) traverse the membrane as a helical segment. At 945–950 (YDVIRV) the chain is on the cytoplasmic side.

The protein belongs to the Ca(2+):cation antiporter (CaCA) (TC 2.A.19) family. SLC8 subfamily. Ubiquitously expressed with higher expression in head compared to body (at protein level). Enriched in photoreceptor cells of the eye (at protein level). In the adult head, expressed in retina, optic ganglia and all neuronal tissues.

It is found in the cell membrane. It localises to the cell projection. The protein resides in the rhabdomere membrane. The enzyme catalyses Ca(2+)(in) + 3 Na(+)(out) = Ca(2+)(out) + 3 Na(+)(in). With respect to regulation, activated by a Na(+) electrochemical gradient but also undergoes Na(2+)-dependent inactivation. Inhibited by micromolar levels of cytoplasmic Ca(2+), which is the opposite of most characterized mammalian homologs. Exhibits greater extent of inhibition by Ca(2+) than isoform D/1.2. Its activity is regulated as follows. Exhibits greater Na(2+)-dependent inactivation than isoform A/1.1, probably due to greater stability of the inactive Na(2+)-bound form. Functionally, na(+)/Ca(2+) antiporter that couples the energy of a Na(+) electrochemical gradient to the movement of Ca(2+) against an electrochemical gradient across a membrane, which contributes to the regulation of cytoplasmic Ca(2+) levels. Mediates Na(+)/Ca(2+) exchange in photoreceptor cells and involved in controlling Ca(2+) levels during phototransduction, affecting magnitude of the photoresponse, activation kinetics, signal amplification, response termination, and light adaptation. Light induced depolarization of photoreceptor cells, resulting in Na(+) and Ca(2+) entry through trp/transient receptor potential protein channels, is essential for photoreceptor cell function but may result in toxic levels of cytoplasmic Ca(2+). Na(+)/Ca(2+) antiporter regulation of Ca(2+) levels protects photoreceptor cells from light-dependent retinal degeneration. This is Sodium/calcium exchanger Calx from Drosophila melanogaster (Fruit fly).